Consider the following 36-residue polypeptide: Gloverin (36 aa).

The protein localises to the secreted. In terms of biological role, antibacterial protein. This Heliothis virescens (Tobacco budworm moth) protein is Gloverin.